We begin with the raw amino-acid sequence, 450 residues long: 3-phosphoshikimate 1-carboxyvinyltransferase (450 aa).

The segment at 1-23 is disordered; sequence MSSHGAPIPMTSSACGPLTGEAR. The 3-phosphoshikimate site is built by Lys-28, Ser-29, and Arg-33. Lys-28 serves as a coordination point for phosphoenolpyruvate. Phosphoenolpyruvate-binding residues include Gly-101 and Arg-129. The 3-phosphoshikimate site is built by Ser-174, Gln-176, Asp-327, and Lys-354. Gln-176 provides a ligand contact to phosphoenolpyruvate. Asp-327 (proton acceptor) is an active-site residue. 2 residues coordinate phosphoenolpyruvate: Arg-358 and Arg-403.

Belongs to the EPSP synthase family. As to quaternary structure, monomer.

The protein localises to the cytoplasm. It catalyses the reaction 3-phosphoshikimate + phosphoenolpyruvate = 5-O-(1-carboxyvinyl)-3-phosphoshikimate + phosphate. The protein operates within metabolic intermediate biosynthesis; chorismate biosynthesis; chorismate from D-erythrose 4-phosphate and phosphoenolpyruvate: step 6/7. Catalyzes the transfer of the enolpyruvyl moiety of phosphoenolpyruvate (PEP) to the 5-hydroxyl of shikimate-3-phosphate (S3P) to produce enolpyruvyl shikimate-3-phosphate and inorganic phosphate. The protein is 3-phosphoshikimate 1-carboxyvinyltransferase of Roseobacter denitrificans (strain ATCC 33942 / OCh 114) (Erythrobacter sp. (strain OCh 114)).